Reading from the N-terminus, the 569-residue chain is Formate--tetrahydrofolate ligase (569 aa).

64 to 71 serves as a coordination point for ATP; sequence TPHGEGKT.

It belongs to the formate--tetrahydrofolate ligase family.

The enzyme catalyses (6S)-5,6,7,8-tetrahydrofolate + formate + ATP = (6R)-10-formyltetrahydrofolate + ADP + phosphate. Its pathway is one-carbon metabolism; tetrahydrofolate interconversion. This Shewanella sp. (strain MR-7) protein is Formate--tetrahydrofolate ligase.